A 226-amino-acid polypeptide reads, in one-letter code: PKHD-type hydroxylase TERTU_2553 (226 aa).

The 100-residue stretch at 78–177 (KIYPPKFNCY…RVASFIWIQS (100 aa)) folds into the Fe2OG dioxygenase domain. Fe cation-binding residues include His96, Asp98, and His158. Arg168 serves as a coordination point for 2-oxoglutarate.

Fe(2+) is required as a cofactor. It depends on L-ascorbate as a cofactor.

The chain is PKHD-type hydroxylase TERTU_2553 from Teredinibacter turnerae (strain ATCC 39867 / T7901).